Reading from the N-terminus, the 212-residue chain is Large ribosomal subunit protein uL1 (212 aa).

It belongs to the universal ribosomal protein uL1 family. In terms of assembly, part of the 50S ribosomal subunit.

In terms of biological role, binds directly to 23S rRNA. Probably involved in E site tRNA release. Functionally, protein L1 is also a translational repressor protein, it controls the translation of its operon by binding to its mRNA. The protein is Large ribosomal subunit protein uL1 of Haloquadratum walsbyi (strain DSM 16790 / HBSQ001).